The chain runs to 265 residues: Small ribosomal subunit protein eS4 (265 aa).

Residues 42 to 104 form the S4 RNA-binding domain; that stretch reads LPLILIIRNR…TNENYRLLYD (63 aa).

Belongs to the eukaryotic ribosomal protein eS4 family.

The protein resides in the cytoplasm. The sequence is that of Small ribosomal subunit protein eS4 (RPS4) from Zea mays (Maize).